The chain runs to 608 residues: Serine/threonine-protein kinase BUR1 (608 aa).

The region spanning 39 to 346 is the Protein kinase domain; the sequence is YEIIQKLGQG…ALDALNHNYF (308 aa). ATP-binding positions include 45–53 and lysine 68; that span reads LGQGTFGVV. Aspartate 174 (proton acceptor) is an active-site residue. 2 disordered regions span residues 383-419 and 443-571; these read HEAN…LALP and YIPK…FDED. Low complexity predominate over residues 400–411; it reads YNNSNNYPRNRN. Basic and acidic residues predominate over residues 471–482; it reads LRDRSPRREGHI. Residues 487–502 show a composition bias toward low complexity; the sequence is STTNSNNISSNSSASN. Polar residues-rich tracts occupy residues 503-512 and 539-548; these read VGGTLSNPTH and PQSSSRNVSD. Positions 559 to 571 are enriched in acidic residues; the sequence is EQNESDLTDFDED.

Belongs to the protein kinase superfamily. CMGC Ser/Thr protein kinase family. CDC2/CDKX subfamily.

It localises to the nucleus. It catalyses the reaction L-seryl-[protein] + ATP = O-phospho-L-seryl-[protein] + ADP + H(+). The enzyme catalyses L-threonyl-[protein] + ATP = O-phospho-L-threonyl-[protein] + ADP + H(+). It carries out the reaction [DNA-directed RNA polymerase] + ATP = phospho-[DNA-directed RNA polymerase] + ADP + H(+). In terms of biological role, serine/threonine-protein kinase involved in transcription regulation. Phosphorylates the UBC2/RAD6 ubiquitin-conjugating enzyme (E2), leading to monoubiquitination of histone H2B and the silencing of telomeric-associated genes. Also required for histone H3 methylation. Necessary for the recovery from pheromone-induced growth arrest in the cell cycle G1 phase. The polypeptide is Serine/threonine-protein kinase BUR1 (BUR1) (Debaryomyces hansenii (strain ATCC 36239 / CBS 767 / BCRC 21394 / JCM 1990 / NBRC 0083 / IGC 2968) (Yeast)).